The sequence spans 307 residues: Nucleotide-binding protein Arth_2083 (307 aa).

Residue 30–37 (GMSGAGRS) participates in ATP binding. Residue 81–84 (DVRS) participates in GTP binding.

Belongs to the RapZ-like family.

Its function is as follows. Displays ATPase and GTPase activities. The sequence is that of Nucleotide-binding protein Arth_2083 from Arthrobacter sp. (strain FB24).